Here is a 171-residue protein sequence, read N- to C-terminus: Translation initiation factor IF-3 (171 aa).

Belongs to the IF-3 family. As to quaternary structure, monomer.

Its subcellular location is the cytoplasm. In terms of biological role, IF-3 binds to the 30S ribosomal subunit and shifts the equilibrium between 70S ribosomes and their 50S and 30S subunits in favor of the free subunits, thus enhancing the availability of 30S subunits on which protein synthesis initiation begins. This chain is Translation initiation factor IF-3, found in Halalkalibacterium halodurans (strain ATCC BAA-125 / DSM 18197 / FERM 7344 / JCM 9153 / C-125) (Bacillus halodurans).